Reading from the N-terminus, the 254-residue chain is MRQKRAKSYRKQLLVYSHTFKFREPYQVLVDNQLVLECNNSNFNLPSGLKRTLQADVKVMITQCCIQALYETRNDGAINLAKQFERRRCNHSFKDPKSPAECIESVVNISGANKHRYVVASQDIDLRRKLRTVPGVPLIHLTRSVMVMEPLSTASAKASKITEEQKLYKGLNDPNIEKLQESGDGSGKESITKKRKLGPKAPNPLSVKKKKKVNSPSDEVKDKEDTSKEKKKRRRRKHKSNTNVPVSNGTTAAQ.

Residues 172–254 (NDPNIEKLQE…PVSNGTTAAQ (83 aa)) form a disordered region. Basic and acidic residues-rich tracts occupy residues 175 to 192 (NIEK…ESIT) and 218 to 228 (DEVKDKEDTSK). Phosphoserine is present on serine 182. Positions 229 to 240 (EKKKRRRRKHKS) are enriched in basic residues. Over residues 241-254 (NTNVPVSNGTTAAQ) the composition is skewed to polar residues.

Belongs to the UTP23/FCF1 family. UTP23 subfamily.

It is found in the mitochondrion. The protein resides in the nucleus. Its subcellular location is the nucleolus. Involved in rRNA-processing and ribosome biogenesis. This Saccharomyces cerevisiae (strain ATCC 204508 / S288c) (Baker's yeast) protein is rRNA-processing protein UTP23 (UTP23).